A 313-amino-acid polypeptide reads, in one-letter code: 4-hydroxyproline 2-epimerase (313 aa).

The segment at 1 to 23 is disordered; it reads MHVIDSHTGGEPTRVILSGGPHL. The active-site Proton acceptor is Cys85. Substrate is bound by residues 86–87, His205, and Asp231; that span reads GH. The active-site Proton donor is Cys235. Substrate is bound at residue 236–237; it reads GT.

This sequence belongs to the proline racemase family.

The enzyme catalyses trans-4-hydroxy-L-proline = cis-4-hydroxy-D-proline. In terms of biological role, catalyzes the epimerization of trans-4-hydroxy-L-proline (t4LHyp) to cis-4-hydroxy-D-proline (c4DHyp). Is likely involved in a degradation pathway that converts t4LHyp to alpha-ketoglutarate. Displays no proline racemase activity. The protein is 4-hydroxyproline 2-epimerase of Ruegeria pomeroyi (strain ATCC 700808 / DSM 15171 / DSS-3) (Silicibacter pomeroyi).